The primary structure comprises 869 residues: Phosphatidylethanolamine N-methyltransferase (869 aa).

Ser2 is subject to N-acetylserine. Residues Ser2–Ser55 lie on the Lumenal side of the membrane. Residues Leu56–Phe76 form a helical membrane-spanning segment. Topologically, residues Gln77–Tyr86 are cytoplasmic. A helical membrane pass occupies residues Phe87 to Leu107. The Lumenal segment spans residues His108 to Gln187. The chain crosses the membrane as a helical span at residues Phe188 to Ile208. The Cytoplasmic portion of the chain corresponds to Pro209 to Trp212. The helical transmembrane segment at Val213–Val233 threads the bilayer. Residues Lys234–Glu258 lie on the Lumenal side of the membrane. A helical transmembrane segment spans residues Leu259–Gly279. Residues Tyr280–Lys291 are Cytoplasmic-facing. A helical transmembrane segment spans residues Val292–Val310. Residues Glu311–Arg362 lie on the Lumenal side of the membrane. A helical transmembrane segment spans residues Phe363 to Ala383. The Cytoplasmic portion of the chain corresponds to Arg384–Asn389. Residues Tyr390 to Leu410 form a helical membrane-spanning segment. Topologically, residues Tyr411–Phe439 are lumenal. A helical transmembrane segment spans residues Ile440 to Ile460. The Cytoplasmic segment spans residues Trp461–Asn463. Residues Phe464–Trp484 form a helical membrane-spanning segment. Over Cys485–Gly534 the chain is Lumenal. A helical transmembrane segment spans residues Val535–Trp555. The Cytoplasmic portion of the chain corresponds to Thr556–Ala869.

It belongs to the class VI-like SAM-binding methyltransferase superfamily. CHO2 family.

It is found in the endoplasmic reticulum membrane. It carries out the reaction a 1,2-diacyl-sn-glycero-3-phosphoethanolamine + S-adenosyl-L-methionine = a 1,2-diacyl-sn-glycero-3-phospho-N-methylethanolamine + S-adenosyl-L-homocysteine + H(+). It functions in the pathway phospholipid metabolism; phosphatidylcholine biosynthesis. In terms of biological role, catalyzes the first step of the methylation pathway of phosphatidylcholine biosynthesis, the SAM-dependent methylation of phosphatidylethanolamine (PE) to phosphatidylmonomethylethanolamine (PMME). Preferentially converts di-C16:1 substrates. The polypeptide is Phosphatidylethanolamine N-methyltransferase (Saccharomyces cerevisiae (strain ATCC 204508 / S288c) (Baker's yeast)).